The chain runs to 132 residues: NAD(P) transhydrogenase subunit alpha part 2 (132 aa).

3 consecutive transmembrane segments (helical) span residues 43 to 63, 72 to 92, and 103 to 123; these read PLVF…YVVW, PLMS…MIAI, and LLGS…FIVT.

Complex of an alpha and a beta chain; in Rickettsia, the alpha chain seems to be made of two subunits.

The protein resides in the cell inner membrane. The catalysed reaction is NAD(+) + NADPH + H(+)(in) = NADH + NADP(+) + H(+)(out). Its function is as follows. The transhydrogenation between NADH and NADP is coupled to respiration and ATP hydrolysis and functions as a proton pump across the membrane. The chain is NAD(P) transhydrogenase subunit alpha part 2 (pntAB) from Rickettsia prowazekii (strain Madrid E).